Here is a 747-residue protein sequence, read N- to C-terminus: Sex-specific storage-protein 1 (747 aa).

The first 15 residues, 1–15 (MRVLVLLACLAAASA), serve as a signal peptide directing secretion. N-linked (GlcNAc...) asparagine glycans are attached at residues N494 and N706.

It belongs to the hemocyanin family. As to expression, fat body.

The protein resides in the secreted. It is found in the extracellular space. Functionally, larval storage protein (LSP) which may serve as a store of amino acids for synthesis of adult proteins. The chain is Sex-specific storage-protein 1 (SP1) from Bombyx mori (Silk moth).